Here is a 55-residue protein sequence, read N- to C-terminus: Serine protease inhibitor Kazal-type 1 (55 aa).

Residues 2 to 55 enclose the Kazal-like domain; that stretch reads QGRDANCNYEFPGCPRNLEPVCGTDGNTYNNECLLCMENKKRDVPIRIQKDGPC. Intrachain disulfides connect Cys-8–Cys-37, Cys-15–Cys-34, and Cys-23–Cys-55.

It is found in the secreted. In terms of biological role, serine protease inhibitor which exhibits anti-trypsin activity. In the pancreas, protects against trypsin-catalyzed premature activation of zymogens. Functionally, in the male reproductive tract, binds to sperm heads where it modulates sperm capacitance by inhibiting calcium uptake and nitrogen oxide (NO) production. This chain is Serine protease inhibitor Kazal-type 1 (SPINK1), found in Monodelphis domestica (Gray short-tailed opossum).